The chain runs to 260 residues: Adenosylcobinamide-GDP ribazoletransferase (260 aa).

The next 7 membrane-spanning stretches (helical) occupy residues 42–62 (PLAG…ANAI), 64–84 (LPPL…TGAL), 117–137 (FAAL…MAII), 144–164 (YALL…LAFW), 192–212 (GLGL…VALI), 214–234 (ALVL…AKIG), and 240–260 (TLGA…VMAL).

The protein belongs to the CobS family. Requires Mg(2+) as cofactor.

The protein localises to the cell inner membrane. The enzyme catalyses alpha-ribazole + adenosylcob(III)inamide-GDP = adenosylcob(III)alamin + GMP + H(+). The catalysed reaction is alpha-ribazole 5'-phosphate + adenosylcob(III)inamide-GDP = adenosylcob(III)alamin 5'-phosphate + GMP + H(+). Its pathway is cofactor biosynthesis; adenosylcobalamin biosynthesis; adenosylcobalamin from cob(II)yrinate a,c-diamide: step 7/7. Joins adenosylcobinamide-GDP and alpha-ribazole to generate adenosylcobalamin (Ado-cobalamin). Also synthesizes adenosylcobalamin 5'-phosphate from adenosylcobinamide-GDP and alpha-ribazole 5'-phosphate. The protein is Adenosylcobinamide-GDP ribazoletransferase of Brucella ovis (strain ATCC 25840 / 63/290 / NCTC 10512).